The chain runs to 197 residues: Guanylate kinase (197 aa).

Positions 1 to 30 (MAATPRGTSPVPPDARPRLTVLSGPSGVGK) are disordered. Residues 17–197 (PRLTVLSGPS…RELLALTNVV (181 aa)) form the Guanylate kinase-like domain. 24–31 (GPSGVGKS) provides a ligand contact to ATP.

It belongs to the guanylate kinase family.

The protein resides in the cytoplasm. The enzyme catalyses GMP + ATP = GDP + ADP. Essential for recycling GMP and indirectly, cGMP. The protein is Guanylate kinase (gmk) of Streptomyces coelicolor (strain ATCC BAA-471 / A3(2) / M145).